We begin with the raw amino-acid sequence, 574 residues long: R-linalool synthase, chloroplastic (574 aa).

The N-terminal 40 residues, Met-1–Leu-40, are a transit peptide targeting the chloroplast. Polar residues predominate over residues Ile-52–Asn-61. Residues Ile-52–Ser-71 are disordered. Arg-287, Asp-324, Asp-328, Arg-467, and Asp-470 together coordinate (2E)-geranyl diphosphate. 2 residues coordinate Mg(2+): Asp-324 and Asp-328. The DDXXD motif motif lies at Asp-324–Asp-328. Mg(2+)-binding residues include Asp-470, Thr-474, and Glu-478.

It belongs to the terpene synthase family. Tpsb subfamily. It depends on Mg(2+) as a cofactor. The cofactor is Mn(2+).

The protein resides in the plastid. The protein localises to the chloroplast. The catalysed reaction is (2E)-geranyl diphosphate + H2O = (R)-linalool + diphosphate. The protein operates within secondary metabolite biosynthesis; terpenoid biosynthesis. Its function is as follows. Monoterpene synthase that catalyzes the formation of (3R)-linalool from geranyl diphosphate. This Ocimum basilicum (Sweet basil) protein is R-linalool synthase, chloroplastic (LIS).